We begin with the raw amino-acid sequence, 190 residues long: Lipid A acyltransferase PagP (190 aa).

An N-terminal signal peptide occupies residues methionine 1–alanine 24. Active-site residues include histidine 62, aspartate 105, and serine 106.

This sequence belongs to the lipid A palmitoyltransferase family. As to quaternary structure, homodimer.

The protein resides in the cell outer membrane. It catalyses the reaction a lipid A + a 1,2-diacyl-sn-glycero-3-phosphocholine = a hepta-acyl lipid A + a 2-acyl-sn-glycero-3-phosphocholine. The catalysed reaction is a lipid IVA + a 1,2-diacyl-sn-glycero-3-phosphocholine = a lipid IVB + a 2-acyl-sn-glycero-3-phosphocholine. The enzyme catalyses a lipid IIA + a 1,2-diacyl-sn-glycero-3-phosphocholine = a lipid IIB + a 2-acyl-sn-glycero-3-phosphocholine. Its function is as follows. Transfers a fatty acid residue from the sn-1 position of a phospholipid to the N-linked hydroxyfatty acid chain on the proximal unit of lipid A or its precursors. The chain is Lipid A acyltransferase PagP from Pantoea ananatis (strain LMG 20103).